The primary structure comprises 152 residues: Protein-export protein SecB (152 aa).

The protein belongs to the SecB family. Homotetramer, a dimer of dimers. One homotetramer interacts with 1 SecA dimer.

It localises to the cytoplasm. One of the proteins required for the normal export of preproteins out of the cell cytoplasm. It is a molecular chaperone that binds to a subset of precursor proteins, maintaining them in a translocation-competent state. It also specifically binds to its receptor SecA. The sequence is that of Protein-export protein SecB from Rickettsia bellii (strain RML369-C).